The following is a 565-amino-acid chain: Beta-hexosaminidase subunit beta (565 aa).

The N-terminal stretch at 1–13 (MIVLLLLISYCFA) is a signal peptide. Residue N71 is glycosylated (N-linked (GlcNAc...) asparagine). The Proton donor role is filled by E347.

The protein belongs to the glycosyl hydrolase 20 family. Heterodimer of one alpha subunit and one beta subunit. In terms of processing, glycosylated.

It localises to the cytoplasmic granule. Its subcellular location is the secreted. The enzyme catalyses Hydrolysis of terminal non-reducing N-acetyl-D-hexosamine residues in N-acetyl-beta-D-hexosaminides.. In terms of biological role, hydrolyzes the non-reducing end N-acetyl-D-hexosamine and/or sulfated N-acetyl-D-hexosamine of glycoconjugates. May contribute to amoebic pathogenicity and may be involved in the destruction of extracellular matrix components. The protein is Beta-hexosaminidase subunit beta of Entamoeba histolytica (strain ATCC 30459 / HM-1:IMSS / ABRM).